The sequence spans 754 residues: MNKGQNQVVPPMSQFGGQNPPQLSSIPPIVNPVVVQNRTSPGTPFITNKAKEIYNRRQQEEISSDSEEEESPIEPAKSKYSRDSRDSRDTRDSRKPKKDSRNMLGSLQKTGTEIAYEPAVKFEMILPKVVKPTRPETPLGIYEQYTPILPPVNNNRFNPAAFQHLFAPSSALLYGQSVKMPMQNVYNINLPGPTGGHVAMDKIYENILPGKNVKCGFSTLGERIQMLDYIRQILVSSCDGENISIDSSGGNSLLSYIKLMELNPNFYSTITNNPYKGLPYGLLIYRSCFPIRFEPTNQSVVCAKNSIGLNIRLYALSYAEYYSYKLNNNIYLEYDVWRELMYYEYVKNRIIKSKQSPNFPILYAYFFCPNRNINFFQLKTNCLTRKELLSEEYKKFRQIHEAISNTGTNKIIRPMSMSGQNDKCQLPDEVDPLFRLYSGTTLILITEAPHHNLYQWASRTYETDGIVQRMTSSGFYDEKIWYDILFQIISALYVMQIHGIYIRNMTIEDNVYIKDLKISGKSCGYWKWIIDGIPYYVPNYGYLVMIDSNFKDTRSESSLLDRDCCEREYKIYANNIYSQKYDSNVLNENIFENYRRIINTNAFTKEHTKNNVMRPPESIMRLIELMSNDPEKNLGTVLHKYFRKYLNNRIGTLLRRDTEIPNVRDVTRQFNNGEMAVEVIGDQMYKWCMVSKTNSDGTVEIITRSDSNLDDYIIKDVRIETLKQYSPYENIDQNLDQEVKLDDNPLETYTISSN.

A disordered region spans residues 1 to 110; that stretch reads MNKGQNQVVP…RNMLGSLQKT (110 aa). Over residues 15–25 the composition is skewed to polar residues; that stretch reads FGGQNPPQLSS. Over residues 26 to 35 the composition is skewed to low complexity; that stretch reads IPPIVNPVVV. Over residues 36 to 46 the composition is skewed to polar residues; that stretch reads QNRTSPGTPFI. Over residues 49 to 60 the composition is skewed to basic and acidic residues; the sequence is KAKEIYNRRQQE. A compositionally biased stretch (acidic residues) spans 62–72; that stretch reads ISSDSEEEESP. Positions 76-93 are enriched in basic and acidic residues; that stretch reads AKSKYSRDSRDSRDTRDS.

The protein resides in the virion. This is an uncharacterized protein from Acanthamoeba polyphaga mimivirus (APMV).